Reading from the N-terminus, the 476-residue chain is Probable G-protein coupled receptor No9 (476 aa).

The Extracellular portion of the chain corresponds to 1-36; the sequence is MEGPPLSPAPADNVTLNVSCGRPATLFDWADHRLIS. 2 N-linked (GlcNAc...) asparagine glycosylation sites follow: Asn-13 and Asn-17. A helical transmembrane segment spans residues 37–60; it reads LLALAFLNLMVVAGNLLVVMAVFV. Over 61–69 the chain is Cytoplasmic; the sequence is HSKLRTVTN. A helical transmembrane segment spans residues 70–93; the sequence is LFIVSLACADLLVGMLVLPFSATL. Residues 94 to 103 lie on the Extracellular side of the membrane; that stretch reads EVLDVWLYGD. A helical transmembrane segment spans residues 104–127; sequence VWCSVWLAVDVWMCTSSILNLCAI. Cys-106 and Cys-192 are joined by a disulfide. The Cytoplasmic segment spans residues 128–152; that stretch reads SLDRYLAVSQPISYPSLMSTRRAKQ. A helical transmembrane segment spans residues 153–172; sequence LIAAVWVLSFVICFPPLVGW. Over 173–200 the chain is Extracellular; the sequence is NDRPGTLIGSRGSSACRLTCELTNERGY. The helical transmembrane segment at 201-221 threads the bilayer; that stretch reads VIYSALGSFFLPSTVMLFFYG. At 222–375 the chain is on the cytoplasmic side; that stretch reads RIYRTAVSTT…FRMETKAAKT (154 aa). The segment covering 266–278 has biased composition (low complexity); it reads AAAGGARAHGQVR. Disordered stretches follow at residues 266–293 and 317–351; these read AAAG…NKPS and DSRP…PRFI. A helical membrane pass occupies residues 376–396; sequence VGIIVGLFILCWLPFFVCYLV. Topologically, residues 397-406 are extracellular; the sequence is RGFCADCVPP. Residues 407–430 traverse the membrane as a helical segment; it reads LLFSVFFWLGYCNSAVNPCVYALC. The Cytoplasmic portion of the chain corresponds to 431 to 476; the sequence is SRDFRFAFSSILCKCVCRRGAMERRFRRTLLVGNRSQTEEDCEVAD.

It belongs to the G-protein coupled receptor 1 family.

It localises to the cell membrane. Its function is as follows. Orphan G-protein coupled receptor. The chain is Probable G-protein coupled receptor No9 from Amphibalanus amphitrite (Striped barnacle).